Reading from the N-terminus, the 522-residue chain is BTB/POZ domain-containing protein 16 (522 aa).

The region spanning 166–222 (INDPAVTRVAFALALKNLYMKEVEMTVDNVLGVLASAHILQFNRLFQKCVNMMMNRL) is the BTB domain.

This chain is BTB/POZ domain-containing protein 16 (Btbd16), found in Mus musculus (Mouse).